A 424-amino-acid chain; its full sequence is Steryl acetyl hydrolase 1 (424 aa).

Ala-2 carries the post-translational modification N-acetylalanine. Residues 2-45 (AANSGLDSKVEYYRLQENEIISAVSSEDADQNDAGFRLSTIHLH) are Cytoplasmic-facing. A helical; Signal-anchor for type II membrane protein transmembrane segment spans residues 46–66 (LFHGLKFAALLFTVVPVFIIL). The Lumenal segment spans residues 67–424 (DSMKIIFQRK…IARILEFMQS (358 aa)). N-linked (GlcNAc...) asparagine glycosylation is present at Asn-85. The Involved in the stabilization of the negatively charged intermediate by the formation of the oxyanion hole signature appears at 176-178 (HGG). Residue Ser-250 is part of the active site. Asn-283 is a glycosylation site (N-linked (GlcNAc...) asparagine). Residue His-395 is part of the active site. Residue Asn-401 is glycosylated (N-linked (GlcNAc...) asparagine).

It belongs to the 'GDXG' lipolytic enzyme family.

Its subcellular location is the endoplasmic reticulum membrane. In terms of biological role, required for the deacetylation of acetylated sterols. Involved in the resistance to eugenol and pregnenolone toxicity. In Saccharomyces cerevisiae (strain ATCC 204508 / S288c) (Baker's yeast), this protein is Steryl acetyl hydrolase 1 (SAY1).